Consider the following 370-residue polypeptide: Probable G-protein coupled receptor 85 (370 aa).

The Extracellular portion of the chain corresponds to 1-25; it reads MANYSHAADNILQNLSPLTAFLKLT. An N-linked (GlcNAc...) asparagine glycan is attached at asparagine 3. A helical transmembrane segment spans residues 26-46; sequence SLGFIIGVSVVGNLLISILLA. At 47-57 the chain is on the cytoplasmic side; that stretch reads KDKTLHRAPYY. The chain crosses the membrane as a helical span at residues 58 to 78; the sequence is FLLDLCCSDILRSAICFPFVF. Residues 79 to 96 lie on the Extracellular side of the membrane; it reads NSVKNGSTWTYGTLTCKV. N-linked (GlcNAc...) asparagine glycosylation occurs at asparagine 83. The cysteines at positions 94 and 172 are disulfide-linked. Residues 97 to 117 traverse the membrane as a helical segment; sequence IAFLGVLSCFHTAFMLFCISV. The Cytoplasmic portion of the chain corresponds to 118-137; sequence TRYLAIAHHRFYTKRLTFWT. The helical transmembrane segment at 138-158 threads the bilayer; that stretch reads CLAVICMVWTLSVAMAFPPVL. The Extracellular portion of the chain corresponds to 159–188; that stretch reads DVGTYSFIREEDQCTFQHRSFRANDSLGFM. An N-linked (GlcNAc...) asparagine glycan is attached at asparagine 182. A helical transmembrane segment spans residues 189–209; it reads LLLALILLATQLVYLKLIFFV. Residues 210-286 are Cytoplasmic-facing; that stretch reads HDRRKMKPVQ…FKMEKRISRM (77 aa). A helical membrane pass occupies residues 287–307; that stretch reads FYIMTFLFLTLWGPYLVACYW. Residues 308–313 lie on the Extracellular side of the membrane; the sequence is RVFARG. Residues 314–334 form a helical membrane-spanning segment; it reads PVVPGGFLTAAVWMSFAQAGI. The Cytoplasmic segment spans residues 335-370; that stretch reads NPFVCIFSNRELRRCFSTTLLYCRKSRLPREPYCVI.

It belongs to the G-protein coupled receptor 1 family. As to quaternary structure, interacts with DLG4 and DLG3.

The protein resides in the cell membrane. It is found in the endoplasmic reticulum. Orphan receptor. The sequence is that of Probable G-protein coupled receptor 85 (GPR85) from Pongo abelii (Sumatran orangutan).